We begin with the raw amino-acid sequence, 649 residues long: Protein translocase subunit SecA 2 (649 aa).

Residues glutamine 105, glycine 123–threonine 127, and aspartate 535 each bind ATP.

It belongs to the SecA family. Monomer and homodimer. Part of the essential Sec protein translocation apparatus which comprises SecA, SecYEG and auxiliary proteins SecDF-YajC and YidC.

The protein resides in the cell inner membrane. It localises to the cytoplasm. The catalysed reaction is ATP + H2O + cellular proteinSide 1 = ADP + phosphate + cellular proteinSide 2.. Part of the Sec protein translocase complex. Interacts with the SecYEG preprotein conducting channel. Has a central role in coupling the hydrolysis of ATP to the transfer of proteins into and across the cell membrane, serving both as a receptor for the preprotein-SecB complex and as an ATP-driven molecular motor driving the stepwise translocation of polypeptide chains across the membrane. The polypeptide is Protein translocase subunit SecA 2 (Magnetococcus marinus (strain ATCC BAA-1437 / JCM 17883 / MC-1)).